The following is a 442-amino-acid chain: Cell division protein FtsZ (442 aa).

Residues 18 to 22 (GGGVN), 105 to 107 (GTG), E136, R140, and D184 each bind GTP. Residues 329-341 (AAPAAEPVQQQVP) are compositionally biased toward low complexity. Residues 329–442 (AAPAAEPVQQ…DDLDVPSFLQ (114 aa)) are disordered. Composition is skewed to basic and acidic residues over residues 349-362 (PEKESIFGGAREEN) and 390-431 (NDRD…RDDR).

Belongs to the FtsZ family. As to quaternary structure, homodimer. Polymerizes to form a dynamic ring structure in a strictly GTP-dependent manner. Interacts directly with several other division proteins.

The protein resides in the cytoplasm. Essential cell division protein that forms a contractile ring structure (Z ring) at the future cell division site. The regulation of the ring assembly controls the timing and the location of cell division. One of the functions of the FtsZ ring is to recruit other cell division proteins to the septum to produce a new cell wall between the dividing cells. Binds GTP and shows GTPase activity. This Corynebacterium glutamicum (strain ATCC 13032 / DSM 20300 / JCM 1318 / BCRC 11384 / CCUG 27702 / LMG 3730 / NBRC 12168 / NCIMB 10025 / NRRL B-2784 / 534) protein is Cell division protein FtsZ.